We begin with the raw amino-acid sequence, 288 residues long: ATP phosphoribosyltransferase (288 aa).

It belongs to the ATP phosphoribosyltransferase family. Long subfamily. Mg(2+) serves as cofactor.

Its subcellular location is the cytoplasm. The enzyme catalyses 1-(5-phospho-beta-D-ribosyl)-ATP + diphosphate = 5-phospho-alpha-D-ribose 1-diphosphate + ATP. Its pathway is amino-acid biosynthesis; L-histidine biosynthesis; L-histidine from 5-phospho-alpha-D-ribose 1-diphosphate: step 1/9. With respect to regulation, feedback inhibited by histidine. Its function is as follows. Catalyzes the condensation of ATP and 5-phosphoribose 1-diphosphate to form N'-(5'-phosphoribosyl)-ATP (PR-ATP). Has a crucial role in the pathway because the rate of histidine biosynthesis seems to be controlled primarily by regulation of HisG enzymatic activity. The chain is ATP phosphoribosyltransferase from Methanococcus maripaludis (strain C7 / ATCC BAA-1331).